A 462-amino-acid chain; its full sequence is Cytochrome c biogenesis protein CcsB (462 aa).

3 consecutive transmembrane segments (helical) span residues 30–50 (LRVA…GTVI), 89–109 (TWWY…CTFR), and 175–195 (IGPI…IWGA).

Belongs to the Ccs1/CcsB family. As to quaternary structure, may interact with CcsA.

The protein resides in the cellular thylakoid membrane. In terms of biological role, required during biogenesis of c-type cytochromes (cytochrome c6 and cytochrome f) at the step of heme attachment. This Picosynechococcus sp. (strain ATCC 27264 / PCC 7002 / PR-6) (Agmenellum quadruplicatum) protein is Cytochrome c biogenesis protein CcsB.